A 75-amino-acid polypeptide reads, in one-letter code: UPF0352 protein YejL (75 aa).

It belongs to the UPF0352 family.

This is UPF0352 protein YejL from Shigella flexneri.